The primary structure comprises 545 residues: Probable intron-encoded endonuclease 4 (545 aa).

Transmembrane regions (helical) follow at residues 1–21, 30–50, 81–101, 119–139, 140–160, 177–197, and 200–220; these read MYLS…FFGR, LITC…FFEV, LTVA…IYSI, LFTF…MFVG, WEGV…RIAA, FLTI…YATV, and LAPY…LIGA. The ndh-5 exons 1 and 2 encoded stretch occupies residues 1-239; it reads MYLSIIILPL…HVWLPMAMEG (239 aa). Residues 240–545 are ndh-5 intron 2 encoded; the sequence is FFSRAFLKLH…NNINKSDYNK (306 aa).

The protein in the N-terminal section; belongs to the complex I subunit 5 family. In the C-terminal section; belongs to the LAGLIDADG endonuclease family.

The protein localises to the mitochondrion membrane. Mitochondrial DNA endonuclease involved in intron homing. The sequence is that of Probable intron-encoded endonuclease 4 from Neurospora crassa (strain ATCC 24698 / 74-OR23-1A / CBS 708.71 / DSM 1257 / FGSC 987).